The following is a 63-amino-acid chain: Small ribosomal subunit protein eS17 (63 aa).

This sequence belongs to the eukaryotic ribosomal protein eS17 family.

The polypeptide is Small ribosomal subunit protein eS17 (Methanococcus maripaludis (strain C7 / ATCC BAA-1331)).